The following is a 208-amino-acid chain: Large ribosomal subunit protein uL3 (208 aa).

An N5-methylglutamine modification is found at Gln-149.

It belongs to the universal ribosomal protein uL3 family. As to quaternary structure, part of the 50S ribosomal subunit. Forms a cluster with proteins L14 and L19. Methylated by PrmB.

In terms of biological role, one of the primary rRNA binding proteins, it binds directly near the 3'-end of the 23S rRNA, where it nucleates assembly of the 50S subunit. The sequence is that of Large ribosomal subunit protein uL3 from Haemophilus influenzae (strain 86-028NP).